We begin with the raw amino-acid sequence, 651 residues long: Peptide-N(4)-(N-acetyl-beta-glucosaminyl)asparagine amidase (651 aa).

Positions 29–90 (EASRLLLTYA…EGETHMVFPK (62 aa)) constitute a PUB domain. 4 residues coordinate Zn(2+): Cys-246, Cys-249, Cys-279, and Cys-282. Cys-305 serves as the catalytic Nucleophile. Catalysis depends on residues His-332 and Asp-349. In terms of domain architecture, PAW spans 450–651 (EFGGRTSGSM…LEMIIKLADL (202 aa)).

Belongs to the transglutaminase-like superfamily. PNGase family. Zn(2+) serves as cofactor.

The protein resides in the cytoplasm. It catalyses the reaction Hydrolysis of an N(4)-(acetyl-beta-D-glucosaminyl)asparagine residue in which the glucosamine residue may be further glycosylated, to yield a (substituted) N-acetyl-beta-D-glucosaminylamine and a peptide containing an aspartate residue.. Its function is as follows. Specifically deglycosylates the denatured form of N-linked glycoproteins in the cytoplasm and assists their proteasome-mediated degradation. Cleaves the beta-aspartyl-glucosamine (GlcNAc) of the glycan and the amide side chain of Asn, converting Asn to Asp. Prefers proteins containing high-mannose over those bearing complex type oligosaccharides. Can recognize misfolded proteins in the endoplasmic reticulum that are exported to the cytosol to be destroyed and deglycosylate them, while it has no activity toward native proteins. Deglycosylation is a prerequisite for subsequent proteasome-mediated degradation of some, but not all, misfolded glycoproteins. This is Peptide-N(4)-(N-acetyl-beta-glucosaminyl)asparagine amidase (NGLY1) from Gallus gallus (Chicken).